Here is a 461-residue protein sequence, read N- to C-terminus: Histone acetyltransferase KAT5 (461 aa).

In terms of domain architecture, Tudor-knot spans 8–65; the sequence is IEGCRLPVLRRNQDNEDEWPLAEILSVKDISGRKLFYVHYIDFNKRLDEWVTHERLDL. Position 52 is an N6-acetyllysine (K52). The interval 70-168 is disordered; sequence FPKKEAKTPT…RMTGSLVSDR (99 aa). Phosphoserine is present on residues S86 and S90. Positions 90–100 are enriched in basic and acidic residues; sequence SPEREVKRKVE. 4 positions are modified to N6-acetyllysine; by autocatalysis: K96, K98, K135, and K137. Position 147 is a phosphoserine (S147). Residues 175-452 enclose the MYST-type HAT domain; that stretch reads TRMKNIECIE…IDSKCLHFTP (278 aa). The segment at 208-233 adopts a C2HC MYST-type zinc-finger fold; that stretch reads LYLCEFCLKYGRSLKCLQRHLTKCDL. N6-acetyllysine; by autocatalysis is present on K275. The interaction with ATF2 stretch occupies residues 316–461; that stretch reads ACILTLPPYQ…PKDWSKRGKW (146 aa). Acetyl-CoA contacts are provided by residues 318–320 and 325–331; these read ILT and QRRGYGK. E351 serves as the catalytic Proton donor/acceptor. Acetyl-CoA-binding residues include S355 and S364. A Glycyl lysine isopeptide (Lys-Gly) (interchain with G-Cter in SUMO1); alternate cross-link involves residue K378. K378 is covalently cross-linked (Glycyl lysine isopeptide (Lys-Gly) (interchain with G-Cter in SUMO2); alternate). K399 participates in a covalent cross-link: Glycyl lysine isopeptide (Lys-Gly) (interchain with G-Cter in SUMO1).

It belongs to the MYST (SAS/MOZ) family. In terms of assembly, component of the NuA4 histone acetyltransferase complex which contains the catalytic subunit KAT5/TIP60 and the subunits EP400, TRRAP/PAF400, BRD8/SMAP, EPC1, DMAP1/DNMAP1, RUVBL1/TIP49, RUVBL2, ING3, actin, ACTL6A/BAF53A, MORF4L1/MRG15, MORF4L2/MRGX, MRGBP, YEATS4/GAS41, VPS72/YL1 and MEAF6. KAT5/TIP60, EPC1, and ING3 together constitute a minimal HAT complex termed Piccolo NuA4. The NuA4 complex interacts with MYC. Interacts with ATM. Interacts with JADE1. Interacts with PLA2G4A/CPLA2, EDNRA and HDAC7. Interacts with the cytoplasmic tail of APP and APBB1/FE65. Interacts with TRIM24 and TRIM68. Forms a complex with SENP6 and UBE2I in response to UV irradiation. Identified in a complex with HINT1. Interacts with ATF2 and CUL3. Interacts with NR1D2 (via N-terminus). Component of a SWR1-like complex. Interacts with FOXP3. Interacts with ZBTB49. Interacts with SRF. Interacts with ATF3; promoting autoacetylation and deubiquitination by USP7. Interacts with EP300/p300; interaction promotes KAT5 autoacetylation. Interacts with PRKDC; interaction is impaired following KAT5 sumoylation. Interacts with GPR50. Post-translationally, phosphorylated on Ser-86 and Ser-90; enhanced during G2/M phase. The phosphorylated form has a higher activity. Phosphorylation at Ser-90 by CDK1 or CDK9 is a prerequisite for phosphorylation at Ser-86 by GSK3. Phosphorylation at Ser-86 by GSK3 (GSK3A or GSK3B) activates acetyltransferase and acyltransferase activities. Phosphorylation at Ser-90 by CDK9 promotes KAT5 recruitment to chromatin. Phosphorylation by VRK1 following DNA damage promotes KAT5 association with chromatin and histone acetyltransferase activity. In terms of processing, autoacetylated. Autoacetylation is required for histone acetyltransferase activity. Autoacetylation at Lys-275 is facilitated by interaction with EP300/p300: it prevents ubiquitination and subsequent degradation by the proteasome and promotes acetylation of target proteins. Deacetylated by HDAC3 and SIRT1. Deacetylation by HDAC3 promotes its ubiquitination and cytoplasmic localization. Sumoylated by UBE2I at Lys-378 and Lys-399, leading to increase of its histone acetyltransferase activity in UV-induced DNA damage response, as well as its translocation to nuclear bodies. Sumoylation with SUMO2 by PIAS4 at Lys-378 promotes repair of DNA double-strand breaks (DSBs) via homologous recombination (HR). Sumoylation by PIAS4 impairs interaction with PRKDC, inhibiting non-homologous end joining (NHEJ)-mediated repair of DSBs, thereby facilitating HR. Desumoylated by SENP3. Post-translationally, ubiquitinated by MDM2, leading to its proteasome-dependent degradation. Ubiquitination is prevented by autoacetylation at Lys-275. Ubiquitinated following deacetylation by HDAC3, leading to cytoplasmic localization. Deubiquitinated by USP7 following interaction with ATF3, promoting its stabilization.

Its subcellular location is the nucleus. The protein resides in the chromosome. It is found in the cytoplasm. The protein localises to the centromere. It localises to the kinetochore. Its subcellular location is the cytoskeleton. The protein resides in the spindle pole. It is found in the nucleolus. The protein localises to the perinuclear region. It carries out the reaction L-lysyl-[histone] + acetyl-CoA = N(6)-acetyl-L-lysyl-[histone] + CoA + H(+). The enzyme catalyses L-lysyl-[protein] + acetyl-CoA = N(6)-acetyl-L-lysyl-[protein] + CoA + H(+). It catalyses the reaction (2E)-butenoyl-CoA + L-lysyl-[protein] = N(6)-(2E)-butenoyl-L-lysyl-[protein] + CoA + H(+). The catalysed reaction is 2-hydroxyisobutanoyl-CoA + L-lysyl-[protein] = N(6)-(2-hydroxyisobutanoyl)-L-lysyl-[protein] + CoA + H(+). It carries out the reaction (S)-lactoyl-CoA + L-lysyl-[protein] = N(6)-[(S)-lactoyl]-L-lysyl-[protein] + CoA + H(+). Acyltransferase and acetyltransferase activities are activated by phosphorylation and autoacetylation. Autoacetylation activates the histone acetyltransferase activity. Functionally, catalytic subunit of the NuA4 histone acetyltransferase complex, a multiprotein complex involved in transcriptional activation of select genes principally by acetylation of nucleosomal histones H2A and H4. Histone acetylation alters nucleosome-DNA interactions and promotes interaction of the modified histones with other proteins which positively regulate transcription. The NuA4 histone acetyltransferase complex is required for the activation of transcriptional programs associated with proto-oncogene mediated growth induction, tumor suppressor mediated growth arrest and replicative senescence, apoptosis, and DNA repair. The NuA4 complex plays a direct role in repair of DNA double-strand breaks (DSBs) by promoting homologous recombination (HR): the complex inhibits TP53BP1 binding to chromatin via MBTD1, which recognizes and binds histone H4 trimethylated at 'Lys-20' (H4K20me), and KAT5 that catalyzes acetylation of 'Lys-15' of histone H2A (H2AK15ac), thereby blocking the ubiquitination mark required for TP53BP1 localization at DNA breaks. Also involved in DSB repair by mediating acetylation of 'Lys-5' of histone H2AX (H2AXK5ac), promoting NBN/NBS1 assembly at the sites of DNA damage. The NuA4 complex plays a key role in hematopoietic stem cell maintenance and is required to maintain acetylated H2A.Z/H2AZ1 at MYC target genes. The NuA4 complex is also required for spermatid development by promoting acetylation of histones: histone hyperacetylation is required for histone replacement during the transition from round to elongating spermatids. Component of a SWR1-like complex that specifically mediates the removal of histone H2A.Z/H2AZ1 from the nucleosome. Also acetylates non-histone proteins, such as BMAL1, ATM, AURKB, CHKA, CGAS, ERCC4/XPF, LPIN1, TP53/p53, NDC80/HEC1, NR1D2, RAN, SOX4, FOXP3, SQSTM1, ULK1 and RUBCNL/Pacer. Directly acetylates and activates ATM. Promotes nucleotide excision repair (NER) by mediating acetylation of ERCC4/XPF, thereby promoting formation of the ERCC4-ERCC1 complex. Relieves NR1D2-mediated inhibition of APOC3 expression by acetylating NR1D2. Acts as a regulator of regulatory T-cells (Treg) by catalyzing FOXP3 acetylation, thereby promoting FOXP3 transcriptional repressor activity. Involved in skeletal myoblast differentiation by mediating acetylation of SOX4. Catalyzes acetylation of APBB1/FE65, increasing its transcription activator activity. Promotes transcription elongation during the activation phase of the circadian cycle by catalyzing acetylation of BMAL1, promoting elongation of circadian transcripts. Together with GSK3 (GSK3A or GSK3B), acts as a regulator of autophagy: phosphorylated at Ser-86 by GSK3 under starvation conditions, leading to activate acetyltransferase activity and promote acetylation of key autophagy regulators, such as ULK1 and RUBCNL/Pacer. Acts as a regulator of the cGAS-STING innate antiviral response by catalyzing acetylation the N-terminus of CGAS, thereby promoting CGAS DNA-binding and activation. Also regulates lipid metabolism by mediating acetylation of CHKA or LPIN1. Promotes lipolysis of lipid droplets following glucose deprivation by mediating acetylation of isoform 1 of CHKA, thereby promoting monomerization of CHKA and its conversion into a tyrosine-protein kinase. Acts as a regulator of fatty-acid-induced triacylglycerol synthesis by catalyzing acetylation of LPIN1, thereby promoting the synthesis of diacylglycerol. In addition to protein acetyltransferase, can use different acyl-CoA substrates, such as (2E)-butenoyl-CoA (crotonyl-CoA), S-lactoyl-CoA (lactyl-CoA) and 2-hydroxyisobutanoyl-CoA (2-hydroxyisobutyryl-CoA), and is able to mediate protein crotonylation, lactylation and 2-hydroxyisobutyrylation, respectively. Acts as a key regulator of chromosome segregation and kinetochore-microtubule attachment during mitosis by mediating acetylation or crotonylation of target proteins. Catalyzes acetylation of AURKB at kinetochores, increasing AURKB activity and promoting accurate chromosome segregation in mitosis. Acetylates RAN during mitosis, promoting microtubule assembly at mitotic chromosomes. Acetylates NDC80/HEC1 during mitosis, promoting robust kinetochore-microtubule attachment. Catalyzes crotonylation of MAPRE1/EB1, thereby ensuring accurate spindle positioning in mitosis. Catalyzes lactylation of NBN/NBS1 in response to DNA damage, thereby promoting DNA double-strand breaks (DSBs) via homologous recombination (HR). The sequence is that of Histone acetyltransferase KAT5 from Pongo abelii (Sumatran orangutan).